Reading from the N-terminus, the 474-residue chain is tRNA-2-methylthio-N(6)-dimethylallyladenosine synthase (474 aa).

In terms of domain architecture, MTTase N-terminal spans 3-120 (QKLHIKTWGC…LPEMINQIRG (118 aa)). The [4Fe-4S] cluster site is built by cysteine 12, cysteine 49, cysteine 83, cysteine 157, cysteine 161, and cysteine 164. In terms of domain architecture, Radical SAM core spans 143 to 375 (RAEGPTAFVS…QQRINNQAAQ (233 aa)). Residues 378–441 (RAMLGTEQRV…TNSLRGEVVR (64 aa)) form the TRAM domain.

The protein belongs to the methylthiotransferase family. MiaB subfamily. In terms of assembly, monomer. [4Fe-4S] cluster serves as cofactor.

Its subcellular location is the cytoplasm. The enzyme catalyses N(6)-dimethylallyladenosine(37) in tRNA + (sulfur carrier)-SH + AH2 + 2 S-adenosyl-L-methionine = 2-methylsulfanyl-N(6)-dimethylallyladenosine(37) in tRNA + (sulfur carrier)-H + 5'-deoxyadenosine + L-methionine + A + S-adenosyl-L-homocysteine + 2 H(+). Catalyzes the methylthiolation of N6-(dimethylallyl)adenosine (i(6)A), leading to the formation of 2-methylthio-N6-(dimethylallyl)adenosine (ms(2)i(6)A) at position 37 in tRNAs that read codons beginning with uridine. This is tRNA-2-methylthio-N(6)-dimethylallyladenosine synthase from Pasteurella multocida (strain Pm70).